The sequence spans 535 residues: Sodium/hydrogen exchanger 9B2 (535 aa).

Over residues 1-14 (MRNQDKRAAHKDSE) the composition is skewed to basic and acidic residues. The tract at residues 1–70 (MRNQDKRAAH…TPAEPNHLQR (70 aa)) is disordered. Over 1 to 85 (MRNQDKRAAH…ACPPRGLLAR (85 aa)) the chain is Cytoplasmic. Polar residues-rich tracts occupy residues 16 to 34 (STEVNHTASSYQGRQQETG) and 46 to 58 (TEGSNLLNNNEKM). Residues 86 to 103 (VITNVTMVILLWAVVWSV) form a helical membrane-spanning segment. At 104–112 (TGSECLPGG) the chain is on the extracellular side. A helical transmembrane segment spans residues 113-132 (NLFGIIMLFYCAIIGGKLFG). Residues 133 to 143 (LIKLPTLPPLP) lie on the Cytoplasmic side of the membrane. A helical transmembrane segment spans residues 144–160 (PLLGMLLAGFLIRNVPV). Residues 161–170 (ISDNIQIKHK) are Extracellular-facing. A helical transmembrane segment spans residues 171-188 (WSSALRSIALSVILVRAG). Topologically, residues 189–199 (LGLDSNALKKL) are cytoplasmic. Residues 200–226 (KGVCVRLSLGPCLIEACTSAVLAYFLM) form a helical membrane-spanning segment. The Extracellular segment spans residues 227–232 (GLPWQW). A helical membrane pass occupies residues 233-241 (GFMLGFVLG). Topologically, residues 242–269 (AVSPAVVVPSMLLLQEGGYGVEKGIPTL) are cytoplasmic. Positions 243, 274, 277, and 278 each coordinate Na(+). The helical transmembrane segment at 270-289 (LMAAGSFDDILAITGFNTCL) threads the bilayer. The Extracellular segment spans residues 290–299 (GMAFSTGSTV). Residues 300 to 323 (FNVLKGVLEVIIGVVTGLVLGFFI) form a helical membrane-spanning segment. Over 324 to 338 (QYFPSSDQDNLVWKR) the chain is Cytoplasmic. Residues 339-356 (AFLVLGLSVLAVFSSTYF) traverse the membrane as a helical segment. Topologically, residues 357 to 360 (GFPG) are extracellular. The helical transmembrane segment at 361–372 (SGGLCTLVTAFL) threads the bilayer. The Cytoplasmic segment spans residues 373-389 (AGRGWASTKTDVEKVIA). A helical membrane pass occupies residues 390–410 (VAWDIFQPLLFGLIGAEVLIT). Residues 411-416 (ALRPET) are Extracellular-facing. Residues 417–439 (IGLCVATLGIAVLIRILVTYLMV) form a helical membrane-spanning segment. Over 440 to 460 (CFAGFNIKEKIFISFAWLPKA) the chain is Cytoplasmic. The chain crosses the membrane as a helical span at residues 461–472 (TVQAAIGSVALD). The Extracellular portion of the chain corresponds to 473-485 (TARSHGEKQLEGY). Residues 486-508 (GMDVLTVAFLSIIITAPVGSLLI) traverse the membrane as a helical segment. Over 509 to 535 (GLLGPRLLQKAEQNKDEEDQGETSIQV) the chain is Cytoplasmic.

The protein belongs to the monovalent cation:proton antiporter 1 (CPA1) transporter (TC 2.A.36) family. As to quaternary structure, homodimer; dimerization is essential for SLC9B2 activity. Lipids seem to play a role in the stabilization of the dimerization subdomain.

The protein resides in the cell membrane. It localises to the mitochondrion membrane. It is found in the endosome membrane. Its subcellular location is the recycling endosome membrane. The protein localises to the lysosome membrane. The protein resides in the cytoplasmic vesicle. It localises to the secretory vesicle. It is found in the synaptic vesicle membrane. Its subcellular location is the cell projection. The protein localises to the cilium. The protein resides in the flagellum membrane. It localises to the basolateral cell membrane. It is found in the apical cell membrane. The catalysed reaction is Li(+)(out) + H(+)(in) = Li(+)(in) + H(+)(out). The enzyme catalyses Li(+)(in) + Na(+)(out) = Li(+)(out) + Na(+)(in). It catalyses the reaction Na(+)(in) + H(+)(out) = Na(+)(out) + H(+)(in). Allosterically inhibited by the N-terminal domain. Inhibited by phloretin. Electroneutral Na(+) Li(+)/H(+) antiporter that extrudes Na(+) or Li(+) in exchange for external protons across the membrane. Uses the proton gradient/membrane potential to extrude sodium. Contributes to the regulation of intracellular pH and sodium homeostasis. Also able to mediate Na(+)/Li(+) antiporter activity in kidney. May play a physiological role in renal tubular function and blood pressure homeostasis. Plays an important role for insulin secretion and clathrin-mediated endocytosis in beta-cells. Involved in sperm motility and fertility. It is controversial whether SLC9B2 plays a role in osteoclast differentiation or not. This chain is Sodium/hydrogen exchanger 9B2 (SLC9B2), found in Bison bison bison (North American plains bison).